Consider the following 1237-residue polypeptide: Rho guanine nucleotide exchange factor 10-like protein (1237 aa).

2 disordered regions span residues 1–117 (MASS…SSRR) and 132–203 (YDDV…QPKM). Residues 25-45 (EAEDDPGEGFEFDDSDDDEDT) are compositionally biased toward acidic residues. Ser-39 carries the post-translational modification Phosphoserine. Tyr-132 and Tyr-153 each carry phosphotyrosine. 2 stretches are compositionally biased toward basic and acidic residues: residues 146–163 (EAER…RAPQ) and 184–194 (EEAKPEAEPTK). Ser-241 is subject to Phosphoserine. Residues 276 to 463 (VRRHILGSIV…ETLAEKLNEQ (188 aa)) enclose the DH domain. Disordered stretches follow at residues 1091–1118 (QEEA…PASH) and 1142–1164 (PGPL…HSEE).

In terms of assembly, interacts with RHOA, RHOB and RHOC.

It localises to the cytoplasm. Its function is as follows. Acts as a guanine nucleotide exchange factor (GEF) for RHOA, RHOB and RHOC. This Bos taurus (Bovine) protein is Rho guanine nucleotide exchange factor 10-like protein (ARHGEF10L).